Consider the following 185-residue polypeptide: Neuronal vesicle trafficking-associated protein 1 (185 aa).

Residues 1 to 82 (MVKLGNNFAE…ITEGVTERFK (82 aa)) are Cytoplasmic-facing. A helical; Signal-anchor for type II membrane protein membrane pass occupies residues 83-103 (VSVLVLFALAFLTCVVFLVVY). Residues 104–185 (KVYKYDRACP…QETEAAEKSA (82 aa)) are Lumenal-facing. The interval 129-164 (ESYYTEQDSSAREKFYTVINHYNVAKQSITRSVSPW) is required for GRIP1 interaction.

The protein belongs to the NSG family. As to quaternary structure, forms a complex with GRIP1, GRIA2 and STX12 through direct interaction with GRIP1; controls the intracellular fate of AMPAR and the endosomal sorting of the GRIA2 subunit toward recycling and membrane targeting. Interacts with STX12. Interacts with APP; could regulate APP processing. Interacts with FAM171A1. Pituitary and less in adrenal gland and testis. Expressed in the hippocampus throughout development. At P0, highly and broadly expressed throughout the cortical plate, but is down-regulated overall at P8 and P14, but remains relatively enriched in layer V. At P0 is expressed ubiquitously in the developing cerebellum namely Purkinje neurons as well as granule neurons. However, it becomes restricted to Purkinje cells by P8. This exclusive expression in Purkinje cells is maintained throughout adulthood.

It localises to the membrane. The protein localises to the golgi apparatus. Its subcellular location is the trans-Golgi network membrane. The protein resides in the endosome membrane. It is found in the cell projection. It localises to the dendrite. The protein localises to the early endosome membrane. Its subcellular location is the late endosome membrane. The protein resides in the lysosome lumen. It is found in the recycling endosome membrane. It localises to the cytoplasmic vesicle membrane. The protein localises to the golgi stack membrane. Its subcellular location is the endosome. The protein resides in the multivesicular body membrane. It is found in the endoplasmic reticulum membrane. In terms of biological role, plays a role in the recycling mechanism in neurons of multiple receptors, including AMPAR, APP and L1CAM and acts at the level of early endosomes to promote sorting of receptors toward a recycling pathway. Regulates sorting and recycling of GRIA2 through interaction with GRIP1 and then contributes to the regulation of synaptic transmission and plasticity by affecting the recycling and targeting of AMPA receptors to the synapse. Is required for faithful sorting of L1CAM to axons by facilitating trafficking from somatodendritic early endosome or the recycling endosome. In an other hand, induces apoptosis via the activation of CASP3 in response to DNA damage. In Mus musculus (Mouse), this protein is Neuronal vesicle trafficking-associated protein 1.